We begin with the raw amino-acid sequence, 216 residues long: Proenkephalin-A-B (216 aa).

Propeptides lie at residues 64 to 85 (MDEL…LAKN), 93 to 131 (EYDS…GEMN), 144 to 155 (STDLEDETRGIQ), 165 to 175 (VGRPEWWQDYQ), and 183 to 207 (TRFT…PDME). A disordered region spans residues 114-133 (PESAIYHDNNSETPGEMNKR).

Belongs to the opioid neuropeptide precursor family. In terms of processing, the N-terminal domain contains 6 conserved cysteines thought to be involved in disulfide bonding and/or processing.

The protein resides in the secreted. Its function is as follows. Enkephalin neuropeptides compete with and mimic the effects of opiate drugs. They play a role in a number of physiologic functions, including pain perception and responses to stress. The protein is Proenkephalin-A-B (penk-b) of Xenopus laevis (African clawed frog).